Consider the following 174-residue polypeptide: Methylated-DNA--protein-cysteine methyltransferase (174 aa).

Cysteine 144 serves as the catalytic Nucleophile; methyl group acceptor.

This sequence belongs to the MGMT family.

Its subcellular location is the cytoplasm. The enzyme catalyses a 6-O-methyl-2'-deoxyguanosine in DNA + L-cysteinyl-[protein] = S-methyl-L-cysteinyl-[protein] + a 2'-deoxyguanosine in DNA. The catalysed reaction is a 4-O-methyl-thymidine in DNA + L-cysteinyl-[protein] = a thymidine in DNA + S-methyl-L-cysteinyl-[protein]. Functionally, involved in the cellular defense against the biological effects of O6-methylguanine (O6-MeG) and O4-methylthymine (O4-MeT) in DNA. Repairs the methylated nucleobase in DNA by stoichiometrically transferring the methyl group to a cysteine residue in the enzyme. This is a suicide reaction: the enzyme is irreversibly inactivated. This chain is Methylated-DNA--protein-cysteine methyltransferase, found in Pyrococcus furiosus (strain ATCC 43587 / DSM 3638 / JCM 8422 / Vc1).